A 167-amino-acid polypeptide reads, in one-letter code: MSTIPSEIINWTILNEIISMDDDDSDFSKGLIIQFIDQAQTTFAQMQRQLDGEKNLTELDNLGHFLKGSSAALGLQRIAWVCERIQNLGRKMEHFFPNKTELVNTLSDKSIINGINIDEDDEEIKIQVDDKDENSIYLILIAKALNQSRLEFKLARIELSKYYNTNL.

The region spanning 24-129 (DSDFSKGLII…DDEEIKIQVD (106 aa)) is the HPt domain. His64 carries the post-translational modification Phosphohistidine.

Belongs to the YPD1 family. As to quaternary structure, interacts with the response regulatory domains of SLN1 and SSK1. In terms of processing, the phosphorelay mechanism involves the sequential transfer of a phosphate group from 'His-576' (H1) to 'Asp-1144' (D1) of SLN1, then to His-64 (H2) of YPD1 and finally to 'Asp-554' (D2) of SSK1 or 'Asp-427' (D2) of SKN7.

Its subcellular location is the cytoplasm. The protein resides in the nucleus. In terms of biological role, phosphorelay intermediate protein that is part of the branched SLN1-YPD1-SKN7/SSK1 two-component regulatory system, which controls activity of the HOG1 pathway and gene expression in response to changes in the osmolarity of the extracellular environment. Catalyzes the phosphoryl group transfer from the membrane-bound osmosensing histidine kinase SLN1 to two distinct response regulator proteins, SSK1 in the cytoplasm, and transcription factor SKN7 in the nucleus. The sequence is that of Phosphorelay intermediate protein YPD1 (YPD1) from Saccharomyces cerevisiae (strain ATCC 204508 / S288c) (Baker's yeast).